Consider the following 385-residue polypeptide: Bifunctional chorismate mutase/prephenate dehydratase (385 aa).

The region spanning 1-92 (MPANNSLLIF…ESVATQKKLL (92 aa)) is the Chorismate mutase domain. Residues Arg-11, Arg-28, Lys-39, Asp-48, Glu-52, Ser-84, and Gln-88 each contribute to the substrate site. Residues 105–285 (NFSFLGPKGS…NITRFILLNR (181 aa)) form the Prephenate dehydratase domain. The interval 286-385 (NPKKISKNIP…PSEKITPIAP (100 aa)) is regulatory. The 78-residue stretch at 299 to 376 (TLIFTTGQEA…RFIKILGCYP (78 aa)) folds into the ACT domain.

The protein resides in the cytoplasm. It carries out the reaction chorismate = prephenate. It catalyses the reaction prephenate + H(+) = 3-phenylpyruvate + CO2 + H2O. It functions in the pathway amino-acid biosynthesis; L-phenylalanine biosynthesis; phenylpyruvate from prephenate: step 1/1. The protein operates within metabolic intermediate biosynthesis; prephenate biosynthesis; prephenate from chorismate: step 1/1. Its function is as follows. Catalyzes the Claisen rearrangement of chorismate to prephenate and the decarboxylation/dehydration of prephenate to phenylpyruvate. The polypeptide is Bifunctional chorismate mutase/prephenate dehydratase (pheA) (Buchnera aphidicola subsp. Acyrthosiphon pisum (strain APS) (Acyrthosiphon pisum symbiotic bacterium)).